A 60-amino-acid chain; its full sequence is Transcriptional regulator Brz (60 aa).

The C4-type; atypical zinc-finger motif lies at 8–52 (CPRCGSDVKMGLPMGATVKSVTAASRQEPTSDTQKVRTVECRNDH).

Belongs to the Brz family.

Functionally, activates transcription of bacteriorhodopsin (bop) and phytoene synthase (crtB1). May interact with DNA or RNA via the zinc finger motif. This chain is Transcriptional regulator Brz (brz), found in Halobacterium salinarum (strain ATCC 29341 / DSM 671 / R1).